The sequence spans 491 residues: UDP-N-acetylmuramate--L-alanine ligase (491 aa).

126–132 (GTHGKTT) contributes to the ATP binding site.

Belongs to the MurCDEF family.

Its subcellular location is the cytoplasm. It catalyses the reaction UDP-N-acetyl-alpha-D-muramate + L-alanine + ATP = UDP-N-acetyl-alpha-D-muramoyl-L-alanine + ADP + phosphate + H(+). Its pathway is cell wall biogenesis; peptidoglycan biosynthesis. Cell wall formation. This chain is UDP-N-acetylmuramate--L-alanine ligase, found in Salmonella paratyphi A (strain ATCC 9150 / SARB42).